Consider the following 312-residue polypeptide: Olfactory receptor 2J1 (312 aa).

At Met1–Val26 the chain is on the extracellular side. Residue Asn6 is glycosylated (N-linked (GlcNAc...) asparagine). Residues Val27–Ser50 traverse the membrane as a helical segment. At Tyr51–Thr58 the chain is on the cytoplasmic side. Residues Pro59–Pro80 form a helical membrane-spanning segment. Residues Gln81–Gln101 are Extracellular-facing. Cys98 and Cys190 are oxidised to a cystine. Residues Leu102–Tyr121 form a helical membrane-spanning segment. At Asp122 to Arg140 the chain is on the cytoplasmic side. A helical transmembrane segment spans residues Phe141–Leu159. The Extracellular portion of the chain corresponds to His160–Asn196. The chain crosses the membrane as a helical span at residues Glu197 to Gly220. Topologically, residues Ala221–Lys237 are cytoplasmic. The chain crosses the membrane as a helical span at residues Val238–Tyr260. The Extracellular segment spans residues Leu261–Lys273. A helical transmembrane segment spans residues Phe274–Phe293. The Cytoplasmic portion of the chain corresponds to Arg294–Met312.

Belongs to the G-protein coupled receptor 1 family.

It localises to the cell membrane. Its function is as follows. Odorant receptor. The sequence is that of Olfactory receptor 2J1 (OR2J1) from Homo sapiens (Human).